The primary structure comprises 229 residues: 5'-methylthioadenosine/S-adenosylhomocysteine nucleosidase (229 aa).

The active-site Proton acceptor is the glutamate 12. Residues glycine 78, isoleucine 152, and 173–174 (ME) contribute to the substrate site. The active-site Proton donor is aspartate 197.

The protein belongs to the PNP/UDP phosphorylase family. MtnN subfamily.

It carries out the reaction S-adenosyl-L-homocysteine + H2O = S-(5-deoxy-D-ribos-5-yl)-L-homocysteine + adenine. The catalysed reaction is S-methyl-5'-thioadenosine + H2O = 5-(methylsulfanyl)-D-ribose + adenine. It catalyses the reaction 5'-deoxyadenosine + H2O = 5-deoxy-D-ribose + adenine. It participates in amino-acid biosynthesis; L-methionine biosynthesis via salvage pathway; S-methyl-5-thio-alpha-D-ribose 1-phosphate from S-methyl-5'-thioadenosine (hydrolase route): step 1/2. In terms of biological role, catalyzes the irreversible cleavage of the glycosidic bond in both 5'-methylthioadenosine (MTA) and S-adenosylhomocysteine (SAH/AdoHcy) to adenine and the corresponding thioribose, 5'-methylthioribose and S-ribosylhomocysteine, respectively. Also cleaves 5'-deoxyadenosine, a toxic by-product of radical S-adenosylmethionine (SAM) enzymes, into 5-deoxyribose and adenine. The chain is 5'-methylthioadenosine/S-adenosylhomocysteine nucleosidase from Histophilus somni (strain 2336) (Haemophilus somnus).